Here is a 188-residue protein sequence, read N- to C-terminus: dCTP deaminase (188 aa).

109–114 contacts dCTP; sequence KSTYAR. Glu135 serves as the catalytic Proton donor/acceptor. DCTP-binding residues include Gln154, Tyr168, and Gln178.

This sequence belongs to the dCTP deaminase family. In terms of assembly, homotrimer.

It carries out the reaction dCTP + H2O + H(+) = dUTP + NH4(+). The protein operates within pyrimidine metabolism; dUMP biosynthesis; dUMP from dCTP (dUTP route): step 1/2. Catalyzes the deamination of dCTP to dUTP. This chain is dCTP deaminase, found in Helicobacter hepaticus (strain ATCC 51449 / 3B1).